We begin with the raw amino-acid sequence, 517 residues long: Acetylcholine receptor subunit gamma (517 aa).

An N-terminal signal peptide occupies residues 1 to 22 (MHGGQGPLLLLLLLAVCLGAQG). Over 23–240 (RNQEERLLAD…VVFYLLIQRK (218 aa)) the chain is Extracellular. N52 and N163 each carry an N-linked (GlcNAc...) asparagine glycan. A disulfide bond links C150 and C164. Transmembrane regions (helical) follow at residues 241–265 (PLFYVINIIAPCVLISSVAILIHFL), 275–293 (TVAINVLLAQTVFLFLVAK), and 309–330 (LTFLLVVTILIVVNAVVVLNVS). Topologically, residues 331–474 (LRSPHTHSMA…WFLVGRVLDR (144 aa)) are cytoplasmic. A helical membrane pass occupies residues 475-495 (VCFLAMLSLFICGTAGIFLMA).

Belongs to the ligand-gated ion channel (TC 1.A.9) family. Acetylcholine receptor (TC 1.A.9.1) subfamily. Gamma/CHRNG sub-subfamily. In terms of assembly, pentamer of two alpha chains, and one each of the beta, delta, and gamma (in immature muscle) or epsilon (in mature muscle) chains.

The protein resides in the postsynaptic cell membrane. It localises to the cell membrane. It carries out the reaction K(+)(in) = K(+)(out). The catalysed reaction is Na(+)(in) = Na(+)(out). Functionally, after binding acetylcholine, the AChR responds by an extensive change in conformation that affects all subunits and leads to opening of an ion-conducting channel across the plasma membrane. The chain is Acetylcholine receptor subunit gamma from Homo sapiens (Human).